Here is a 404-residue protein sequence, read N- to C-terminus: Formate-dependent phosphoribosylglycinamide formyltransferase (404 aa).

Residues 25–26 (EL) and E85 each bind N(1)-(5-phospho-beta-D-ribosyl)glycinamide. ATP-binding positions include R118, K159, 164–169 (SSGKGQ), 199–202 (EGFV), and E207. In terms of domain architecture, ATP-grasp spans 123–318 (RLAAEELGLP…EFELHARAIL (196 aa)). Positions 277 and 289 each coordinate Mg(2+). Residues D296, K365, and 372-373 (RR) each bind N(1)-(5-phospho-beta-D-ribosyl)glycinamide.

The protein belongs to the PurK/PurT family. As to quaternary structure, homodimer.

The catalysed reaction is N(1)-(5-phospho-beta-D-ribosyl)glycinamide + formate + ATP = N(2)-formyl-N(1)-(5-phospho-beta-D-ribosyl)glycinamide + ADP + phosphate + H(+). The protein operates within purine metabolism; IMP biosynthesis via de novo pathway; N(2)-formyl-N(1)-(5-phospho-D-ribosyl)glycinamide from N(1)-(5-phospho-D-ribosyl)glycinamide (formate route): step 1/1. Its function is as follows. Involved in the de novo purine biosynthesis. Catalyzes the transfer of formate to 5-phospho-ribosyl-glycinamide (GAR), producing 5-phospho-ribosyl-N-formylglycinamide (FGAR). Formate is provided by PurU via hydrolysis of 10-formyl-tetrahydrofolate. The protein is Formate-dependent phosphoribosylglycinamide formyltransferase of Burkholderia cenocepacia (strain HI2424).